We begin with the raw amino-acid sequence, 145 residues long: Hemoglobin subunit beta (145 aa).

Residues 1–145 (MLTAEEKAAV…VANALAHRYH (145 aa)) form the Globin domain. A Phosphothreonine modification is found at Thr11. Ser43 is subject to Phosphoserine. Lys58 carries the N6-acetyllysine modification. His62 lines the heme b pocket. Lys81 is modified (N6-acetyllysine). His91 is a binding site for heme b. Cys92 carries the post-translational modification S-nitrosocysteine.

The protein belongs to the globin family. As to quaternary structure, heterotetramer of two alpha chains and two beta chains. As to expression, red blood cells.

Its function is as follows. Involved in oxygen transport from the lung to the various peripheral tissues. The sequence is that of Hemoglobin subunit beta (HBB) from Bos mutus grunniens (Wild yak).